Here is a 514-residue protein sequence, read N- to C-terminus: Probable endopolygalacturonase D (514 aa).

Positions Met1 to Ala16 are cleaved as a signal peptide. A disordered region spans residues Ile134–Thr166. Over residues Ser136–Thr166 the composition is skewed to low complexity. Cysteines 173 and 188 form a disulfide. Asn240 carries N-linked (GlcNAc...) asparagine glycosylation. PbH1 repeat units lie at residues Val280–Asn302, Thr303–Ser341, Ser342–Ser363, Gly364–Ser384, Val393–Thr414, Val422–Gln444, and Ser456–Gly500. The tract at residues Thr312 to Asp335 is disordered. Asn322 carries N-linked (GlcNAc...) asparagine glycosylation. Catalysis depends on Asp356, which acts as the Proton donor. Cys358 and Cys374 form a disulfide bridge. N-linked (GlcNAc...) asparagine glycosylation is present at Asn366. Residue His378 is part of the active site. Residue Asn429 is glycosylated (N-linked (GlcNAc...) asparagine). A disulfide bond links Cys483 and Cys488. The N-linked (GlcNAc...) asparagine glycan is linked to Asn490. Cys506 and Cys513 are oxidised to a cystine.

This sequence belongs to the glycosyl hydrolase 28 family.

The protein resides in the secreted. The enzyme catalyses (1,4-alpha-D-galacturonosyl)n+m + H2O = (1,4-alpha-D-galacturonosyl)n + (1,4-alpha-D-galacturonosyl)m.. In terms of biological role, involved in maceration and soft-rotting of plant tissue. Hydrolyzes the 1,4-alpha glycosidic bonds of de-esterified pectate in the smooth region of the plant cell wall. The chain is Probable endopolygalacturonase D (pgaD) from Emericella nidulans (strain FGSC A4 / ATCC 38163 / CBS 112.46 / NRRL 194 / M139) (Aspergillus nidulans).